A 242-amino-acid polypeptide reads, in one-letter code: ATP synthase subunit a (242 aa).

The next 6 helical transmembrane spans lie at 29–49, 84–104, 114–134, 140–160, 189–209, and 210–230; these read SSIY…LAFY, FIPL…LGMT, IIVT…VGFV, FLTL…MIVI, VIAG…IPLM, and MILI…FTIL.

Belongs to the ATPase A chain family. In terms of assembly, F-type ATPases have 2 components, CF(1) - the catalytic core - and CF(0) - the membrane proton channel. CF(1) has five subunits: alpha(3), beta(3), gamma(1), delta(1), epsilon(1). CF(0) has three main subunits: a(1), b(2) and c(9-12). The alpha and beta chains form an alternating ring which encloses part of the gamma chain. CF(1) is attached to CF(0) by a central stalk formed by the gamma and epsilon chains, while a peripheral stalk is formed by the delta and b chains.

It is found in the cell inner membrane. In terms of biological role, key component of the proton channel; it plays a direct role in the translocation of protons across the membrane. The polypeptide is ATP synthase subunit a (Rickettsia massiliae (strain Mtu5)).